A 64-amino-acid chain; its full sequence is Potassium channel toxin kappa-KTx 3.4 (64 aa).

The N-terminal stretch at 1 to 26 (MKSTLMTASLLILVLLSIIDYASVYA) is a signal peptide. Positions 27 to 36 (EFIDSEISLE) are excised as a propeptide. Cystine bridges form between C43–C61 and C47–C57.

The protein belongs to the short scorpion toxin superfamily. Potassium channel inhibitor kappa-KTx family. Kappa-KTx 3 subfamily. In terms of tissue distribution, expressed by the venom gland.

It is found in the secreted. Functionally, potassium channel inhibitor (Kv). The protein is Potassium channel toxin kappa-KTx 3.4 of Heterometrus petersii (Asian forest scorpion).